The following is a 258-amino-acid chain: tRNA pseudouridine synthase A (258 aa).

Residue Asp-54 is the Nucleophile of the active site. Tyr-112 contacts substrate.

This sequence belongs to the tRNA pseudouridine synthase TruA family. Homodimer.

It carries out the reaction uridine(38/39/40) in tRNA = pseudouridine(38/39/40) in tRNA. Functionally, formation of pseudouridine at positions 38, 39 and 40 in the anticodon stem and loop of transfer RNAs. This is tRNA pseudouridine synthase A from Geobacillus kaustophilus (strain HTA426).